Reading from the N-terminus, the 398-residue chain is Inositol polyphosphate 5-phosphatase (398 aa).

It belongs to the inositol 1,4,5-trisphosphate 5-phosphatase type II family. Expressed in tail, cilia, dendrites, axon and male head.

Its subcellular location is the cytoplasm. Dephosphorylates a number of phosphatidylinositols. Controls the cellular levels and subcellular distribution of phosphatidylinositol 3,5-bisphosphate and phosphatidylinositol 3,4,5-trisphosphate. Has a role in sperm activation and motility. Influences the localization of the transient receptor potential polycystin (TRPP) complex proteins lov-1 and pkd-2. This is Inositol polyphosphate 5-phosphatase from Caenorhabditis elegans.